Reading from the N-terminus, the 618-residue chain is Glycine--tRNA ligase 2 (618 aa).

Residue Glu-187 participates in glycine binding. Residues 219 to 221 (RNE) and 230 to 231 (RV) each bind ATP. Residue Glu-238 participates in glycine binding. Residue 347–348 (EC) coordinates ATP. Residue 466-468 (EPS) coordinates glycine. Residue Arg-473 coordinates ATP.

This sequence belongs to the class-II aminoacyl-tRNA synthetase family. In terms of assembly, homodimer.

Its subcellular location is the cytoplasm. The catalysed reaction is tRNA(Gly) + glycine + ATP = glycyl-tRNA(Gly) + AMP + diphosphate. The enzyme catalyses 2 ATP + H(+) = P(1),P(4)-bis(5'-adenosyl) tetraphosphate + diphosphate. Functionally, catalyzes the ATP-dependent ligation of glycine to the 3'-end of its cognate tRNA, via the formation of an aminoacyl-adenylate intermediate (Gly-AMP). Also produces diadenosine tetraphosphate (Ap4A), a universal pleiotropic signaling molecule needed for cell regulation pathways, by direct condensation of 2 ATPs. Thereby, may play a special role in Ap4A homeostasis. This Saccharomyces cerevisiae (strain ATCC 204508 / S288c) (Baker's yeast) protein is Glycine--tRNA ligase 2 (GRS2).